Here is a 379-residue protein sequence, read N- to C-terminus: 3-dehydroquinate synthase (379 aa).

Residues 113-117, 137-138, Lys150, and Lys159 each bind NAD(+); these read GVIGD and TS. The Zn(2+) site is built by Glu192, His256, and His274.

It belongs to the sugar phosphate cyclases superfamily. Dehydroquinate synthase family. It depends on Co(2+) as a cofactor. Zn(2+) serves as cofactor. The cofactor is NAD(+).

It localises to the cytoplasm. It carries out the reaction 7-phospho-2-dehydro-3-deoxy-D-arabino-heptonate = 3-dehydroquinate + phosphate. Its pathway is metabolic intermediate biosynthesis; chorismate biosynthesis; chorismate from D-erythrose 4-phosphate and phosphoenolpyruvate: step 2/7. Catalyzes the conversion of 3-deoxy-D-arabino-heptulosonate 7-phosphate (DAHP) to dehydroquinate (DHQ). The polypeptide is 3-dehydroquinate synthase (Zymomonas mobilis subsp. mobilis (strain ATCC 31821 / ZM4 / CP4)).